A 423-amino-acid chain; its full sequence is Elongation factor 1-alpha (423 aa).

The tr-type G domain occupies 5–221; that stretch reads KEHINVAFIG…DLLKPPEKLV (217 aa). The interval 14-21 is G1; it reads GHVDHGKS. 14–21 lines the GTP pocket; that stretch reads GHVDHGKS. Position 21 (Ser21) interacts with Mg(2+). Residues 70-74 form a G2 region; it reads GVTID. The tract at residues 91-94 is G3; it reads DCPG. GTP is bound by residues 91-95 and 146-149; these read DCPGH and NKMD. The interval 146–149 is G4; that stretch reads NKMD. The interval 185-187 is G5; the sequence is SAY.

It belongs to the TRAFAC class translation factor GTPase superfamily. Classic translation factor GTPase family. EF-Tu/EF-1A subfamily.

It localises to the cytoplasm. It catalyses the reaction GTP + H2O = GDP + phosphate + H(+). In terms of biological role, GTP hydrolase that promotes the GTP-dependent binding of aminoacyl-tRNA to the A-site of ribosomes during protein biosynthesis. This is Elongation factor 1-alpha from Archaeoglobus fulgidus (strain ATCC 49558 / DSM 4304 / JCM 9628 / NBRC 100126 / VC-16).